We begin with the raw amino-acid sequence, 130 residues long: Small ribosomal subunit protein uS11c (130 aa).

It belongs to the universal ribosomal protein uS11 family. Part of the 30S ribosomal subunit.

The protein resides in the plastid. It is found in the chloroplast. The polypeptide is Small ribosomal subunit protein uS11c (Adiantum capillus-veneris (Maidenhair fern)).